The primary structure comprises 185 residues: Prenylated Rab acceptor protein 1 (185 aa).

Residues 1-78 (MAAQKDQQKD…RNVEYYQSNY (78 aa)) are Cytoplasmic-facing. Positions 30 to 54 (AGREWLERRRATIRPWGTFVDQQRF) are required for interaction with prenylated RAB3A and VAMP2. The next 2 membrane-spanning stretches (helical) occupy residues 79-94 (VFVF…VTSP) and 95-112 (MLLV…ILYL). Residues 113–131 (RTLQSKLVLFGREVSPAHQ) are Cytoplasmic-facing. Transmembrane regions (helical) follow at residues 132–148 (YALA…LAGA) and 149–165 (GSAV…LIGS). The required for interaction with GDI1 stretch occupies residues 165–185 (SHAAFHQIEPADGEELQMEPV). Topologically, residues 166–185 (HAAFHQIEPADGEELQMEPV) are cytoplasmic. The interval 175–185 (ADGEELQMEPV) is required for interaction with prenylated RAB3A and VAMP2. The interval 175-185 (ADGEELQMEPV) is homodimerization.

The protein belongs to the PRA1 family. As to quaternary structure, homodimers. Interacts specifically with both prenylated Rab proteins (including RAB3A and RAB1), and VAMP2 (synaptobrevin-2), in an exclusive way. Interacts with NDRG1. Interacts with free GDI1 in the absence of Rab proteins. Also interacts with PCLO. Ubiquitous.

The protein resides in the cell membrane. Its subcellular location is the cytoplasm. It is found in the golgi apparatus. It localises to the cytoplasmic vesicle. The protein localises to the secretory vesicle. The protein resides in the synaptic vesicle. General Rab protein regulator required for vesicle formation from the Golgi complex. May control vesicle docking and fusion by mediating the action of Rab GTPases to the SNARE complexes. In addition it inhibits the removal of Rab GTPases from the membrane by GDI1. The sequence is that of Prenylated Rab acceptor protein 1 (Rabac1) from Rattus norvegicus (Rat).